We begin with the raw amino-acid sequence, 590 residues long: MIVFDNGTRVFINSSTNKDIYVGFSGFGFEKDIGGILGIAHLLEHILISFDASRFVANASTARSYMSFWCTPIRGRATSVDAVRTLISWFFDKDGLKDDFPVSKIKYHIKELENEYYFRNEVFHCMDALTFLANGDLYNGGRLSMLDRLEDIPLILRDRMRTIIGPNVVIFVRELNDVVLSLLANTFGRLPACPLTIPCTVRTIIGGKTIMMPSPFYTVMVRVEPSLHNILSILCLYEIYHLVDYETVDNKLYVTFSFIHEHDYERFLQGSGRLNLTIYKKIRLCYGDDFLMNVYLSFPCIRHDIFDYLTIVNTDTSSMISSLERDIYQSVRTGDYIVVYPNFSNTMSNTADRQLHKTVVINPNIVYASQPTTSIDLMKKQTHNEMYIKYSDAGFIDYVQLALGLRRKIHKHVHGIHIRHQFSADDIKTILESDTFMKYSKSKPAAMYQYLILSFFVSGNTIEDILQHRESVVKLCRTYKNKIVLGKQTRYDIQTLSSFVCGIFKGPSVTSEYLTDIMWKLKRKGLIYSLEFVELQKNMFYLFMFTIYPEDVTTYLSSRKLFTSRCVVVSKKGNTEDFSSMKKDIIIKLR.

H41 contacts Zn(2+). The active site involves E44. Zn(2+) is bound at residue H45.

This sequence belongs to the peptidase M44 family. Zn(2+) is required as a cofactor.

Functionally, seems to be involved in viral proteins maturation by cleavage at Ala-Gly-|-Xaa motifs. In Oryctolagus cuniculus (Rabbit), this protein is Probable metalloendopeptidase G1-type.